Consider the following 195-residue polypeptide: Xanthine phosphoribosyltransferase (195 aa).

Xanthine-binding residues include L20 and N27. 128–132 lines the 5-phospho-alpha-D-ribose 1-diphosphate pocket; sequence ANGQA. K156 provides a ligand contact to xanthine.

The protein belongs to the purine/pyrimidine phosphoribosyltransferase family. Xpt subfamily. Homodimer.

The protein localises to the cytoplasm. It carries out the reaction XMP + diphosphate = xanthine + 5-phospho-alpha-D-ribose 1-diphosphate. It functions in the pathway purine metabolism; XMP biosynthesis via salvage pathway; XMP from xanthine: step 1/1. In terms of biological role, converts the preformed base xanthine, a product of nucleic acid breakdown, to xanthosine 5'-monophosphate (XMP), so it can be reused for RNA or DNA synthesis. This is Xanthine phosphoribosyltransferase from Latilactobacillus sakei subsp. sakei (strain 23K) (Lactobacillus sakei subsp. sakei).